The following is a 328-amino-acid chain: DhaKLM operon coactivator DhaQ (328 aa).

Residues 6-328 form the DhaK domain; it reads STNEIPEEML…LNVPTGAFAW (323 aa). Histidine 215 carries the post-translational modification Tele-(1,2,3-trihydroxypropan-2-yl)histidine.

As to quaternary structure, homodimer. Interacts with a homodimer of DhaS.

In terms of biological role, coactivator for the transcription factor DhaS. The heterotetramer formed by DhaQ and DhaS functions as a transcriptional regulator. Activated by covalent binding of dihydroxyacetone to DhaQ. The complex activates the dhaKLM operon. This is DhaKLM operon coactivator DhaQ (dhaQ) from Lactococcus lactis subsp. lactis (strain IL1403) (Streptococcus lactis).